Reading from the N-terminus, the 160-residue chain is SsrA-binding protein (160 aa).

It belongs to the SmpB family.

It localises to the cytoplasm. Functionally, required for rescue of stalled ribosomes mediated by trans-translation. Binds to transfer-messenger RNA (tmRNA), required for stable association of tmRNA with ribosomes. tmRNA and SmpB together mimic tRNA shape, replacing the anticodon stem-loop with SmpB. tmRNA is encoded by the ssrA gene; the 2 termini fold to resemble tRNA(Ala) and it encodes a 'tag peptide', a short internal open reading frame. During trans-translation Ala-aminoacylated tmRNA acts like a tRNA, entering the A-site of stalled ribosomes, displacing the stalled mRNA. The ribosome then switches to translate the ORF on the tmRNA; the nascent peptide is terminated with the 'tag peptide' encoded by the tmRNA and targeted for degradation. The ribosome is freed to recommence translation, which seems to be the essential function of trans-translation. The protein is SsrA-binding protein of Mannheimia succiniciproducens (strain KCTC 0769BP / MBEL55E).